The sequence spans 455 residues: ATP-dependent protease ATPase subunit HslU (455 aa).

ATP-binding positions include Val-23, 65–70 (GVGKTE), Asp-266, Glu-333, and Arg-405.

It belongs to the ClpX chaperone family. HslU subfamily. A double ring-shaped homohexamer of HslV is capped on each side by a ring-shaped HslU homohexamer. The assembly of the HslU/HslV complex is dependent on binding of ATP.

The protein localises to the cytoplasm. Its function is as follows. ATPase subunit of a proteasome-like degradation complex; this subunit has chaperone activity. The binding of ATP and its subsequent hydrolysis by HslU are essential for unfolding of protein substrates subsequently hydrolyzed by HslV. HslU recognizes the N-terminal part of its protein substrates and unfolds these before they are guided to HslV for hydrolysis. The chain is ATP-dependent protease ATPase subunit HslU from Xanthomonas euvesicatoria pv. vesicatoria (strain 85-10) (Xanthomonas campestris pv. vesicatoria).